The primary structure comprises 436 residues: MSTIAAVWAREILDSRGNPTVEVEVTLESGASGRAAVPSGASTGSREALEMRDQDASRYAGKGVTKAVENVQGELADTVIGMDALQQVAIDNLMIDTDGTENKSRLGANAILGVSLAVCRAASNFLGLPLYQYIGGINSKVLPVPMMNIINGGAHAPNNLDIQEFMIIPLGARTFADALRMGAETFHTLKKILAADGHMTAVGDEGGFAPNLKSHDEAFKYIIKAIEESGYRPGSEISLAIDAAASEFYKNGKYVLTGENLSLSSTEMVDYLGGFVERYPLISIEDGLAESDWPGWKTLTLNLGERIQLVGDDIFVTNPDILAEGIDQGVANSILIKLNQIGTVTETLDTIEMAKQAAYTTVVSHRSGETEDSFIADLSVAVNAGQIKTGSLCRSDRLAKYNQLLRIEEELEDMAIYYGPVMAGQWYEEEPEGDEE.

Q163 lines the (2R)-2-phosphoglycerate pocket. The active-site Proton donor is the E205. 3 residues coordinate Mg(2+): D242, E285, and D312. Positions 337, 366, 367, and 388 each coordinate (2R)-2-phosphoglycerate. Catalysis depends on K337, which acts as the Proton acceptor.

This sequence belongs to the enolase family. Requires Mg(2+) as cofactor.

The protein resides in the cytoplasm. Its subcellular location is the secreted. It is found in the cell surface. It catalyses the reaction (2R)-2-phosphoglycerate = phosphoenolpyruvate + H2O. The protein operates within carbohydrate degradation; glycolysis; pyruvate from D-glyceraldehyde 3-phosphate: step 4/5. In terms of biological role, catalyzes the reversible conversion of 2-phosphoglycerate (2-PG) into phosphoenolpyruvate (PEP). It is essential for the degradation of carbohydrates via glycolysis. This Solidesulfovibrio magneticus (strain ATCC 700980 / DSM 13731 / RS-1) (Desulfovibrio magneticus) protein is Enolase.